The sequence spans 257 residues: Protein CUSTOS (257 aa).

Residues 1 to 11 (MSDLESSSSSS) are compositionally biased toward low complexity. The tract at residues 1-72 (MSDLESSSSS…HEQDGNELQT (72 aa)) is disordered. The segment covering 32 to 41 (QRPRGPEKPG) has biased composition (basic and acidic residues). Ser-55 is modified (phosphoserine). Thr-73 carries the post-translational modification Phosphothreonine. 2 disordered regions span residues 120–157 (FTSIPGGPEKEAAPQPCRKRLPSSSSSDDGDEELRRCR) and 170–257 (SAIH…VPSN). 2 stretches are compositionally biased toward basic residues: residues 180-190 (KKKKRKLKKKA) and 227-237 (TKKKKRKKKTK). Positions 228–236 (KKKKRKKKT) match the Nucleolar localization signal (NLS) motif.

The protein belongs to the CUSTOS family.

It localises to the nucleus envelope. Functionally, plays a role in the regulation of Wnt signaling pathway during early development. The protein is Protein CUSTOS of Bos taurus (Bovine).